We begin with the raw amino-acid sequence, 642 residues long: Probable malate:quinone oxidoreductase (642 aa).

The unknown stretch occupies residues 1–142 (MIVVFRHEST…TTRGDKRKLN (142 aa)). The interval 143-642 (MSDSPKNAQK…TQKTLKLEKA (500 aa)) is MQO domain.

This sequence in the C-terminal section; belongs to the MQO family. Requires FAD as cofactor.

The enzyme catalyses (S)-malate + a quinone = a quinol + oxaloacetate. It functions in the pathway carbohydrate metabolism; tricarboxylic acid cycle; oxaloacetate from (S)-malate (quinone route): step 1/1. This Corynebacterium efficiens (strain DSM 44549 / YS-314 / AJ 12310 / JCM 11189 / NBRC 100395) protein is Probable malate:quinone oxidoreductase (mqo).